A 125-amino-acid chain; its full sequence is Calcitonin receptor-stimulating peptide 2 (125 aa).

Positions 1–25 (MGFWKFLPFLVLSFLVVYQAGMFQA) are cleaved as a signal peptide. The propeptide occupies 26-77 (APFRSALENDFDPAILTEKEMCLLLAAVMNDYVQMKTSELKQEAEHFHITAQ). The cysteines at positions 81 and 86 are disulfide-linked.

It belongs to the calcitonin family.

The protein localises to the secreted. The sequence is that of Calcitonin receptor-stimulating peptide 2 (CRSP2) from Capra hircus (Goat).